Consider the following 239-residue polypeptide: MAAIPWRPFNLRGIKMKGLLSLLIFSMVLPAHAGIVIYGTRIIYPAENKEVMVQLMNQGNRSSLLQAWIDDGDTSLPPEKIQVPFMLTPPVAKIGANSGQQVKIKIMPNKLPTNKESIFYLNVLDIPPNSPEQEGKNALKFAMQNRIKLFYRPAGIAPVNKATFKKLLVNRSGNGLVIKNDSANWVTISDVKANNVKVNYETIMIAPLESQSVNVKSNNANNWHLTIIDDHGNYISDKI.

The N-terminal stretch at 1 to 31 is a signal peptide; it reads MAAIPWRPFNLRGIKMKGLLSLLIFSMVLPA.

This sequence belongs to the periplasmic pilus chaperone family.

The protein localises to the periplasm. In terms of biological role, part of the yehABCD fimbrial operon. Could contribute to adhesion to various surfaces in specific environmental niches. This Escherichia coli (strain K12) protein is Probable fimbrial chaperone YehC (yehC).